We begin with the raw amino-acid sequence, 1395 residues long: DNA-directed RNA polymerase subunit beta' (1395 aa).

Zn(2+)-binding residues include Cys-70, Cys-72, Cys-85, and Cys-88. Residues Asp-461, Asp-463, and Asp-465 each contribute to the Mg(2+) site. Residues Cys-815, Cys-889, Cys-896, and Cys-899 each coordinate Zn(2+).

It belongs to the RNA polymerase beta' chain family. The RNAP catalytic core consists of 2 alpha, 1 beta, 1 beta' and 1 omega subunit. When a sigma factor is associated with the core the holoenzyme is formed, which can initiate transcription. The cofactor is Mg(2+). Zn(2+) serves as cofactor.

It catalyses the reaction RNA(n) + a ribonucleoside 5'-triphosphate = RNA(n+1) + diphosphate. DNA-dependent RNA polymerase catalyzes the transcription of DNA into RNA using the four ribonucleoside triphosphates as substrates. This Ruthia magnifica subsp. Calyptogena magnifica protein is DNA-directed RNA polymerase subunit beta'.